We begin with the raw amino-acid sequence, 38 residues long: Small toxic protein BsrG (38 aa).

The helical transmembrane segment at 11–31 (INFGGLILNTVLLIFNIMMIV) threads the bilayer.

The protein resides in the cell membrane. Functionally, toxic component of a type I toxin-antitoxin (TA) system; expression in the absence of cognate antisense antitoxin SR4 RNA leads to cell lysis. Induced expression causes membrane invaginations that dislocate the cell wall synthesis machinery, leading to eventual death. Unlike many type I TA systems it does not form pores. Base pairing occurs between the 3' UTRs of bsrG mRNA and SR4 RNA, which leads to initiation of degradation by RNase III (rnc) followed by the action of RNase Y (rny) and RNase R (rnr). Not toxic when expressed in E.coli. When induced during logarithmic growth it only slowly exerts its toxic effect. Expression during log growth leads to significant disturbances of cell envelope biosynthesis and cell morphology, causing cell membrane invaginations and delocalization of cell division and cell wall synthesis machinery. Cell lysis depends on mreB, lytC and lytD, suggesting expression of bsrG triggers autolysis rather than disintegration of the membrane. Additionally expression of bsrG also inhibits transcription. The sequence is that of Small toxic protein BsrG from Bacillus subtilis (strain 168).